Consider the following 223-residue polypeptide: Ribose-5-phosphate isomerase A (223 aa).

Residues 32 to 35 (TGST), 85 to 88 (DGAD), and 98 to 101 (KGGG) each bind substrate. The active-site Proton acceptor is the Glu107. Lys125 serves as a coordination point for substrate.

The protein belongs to the ribose 5-phosphate isomerase family. As to quaternary structure, homodimer.

The enzyme catalyses aldehydo-D-ribose 5-phosphate = D-ribulose 5-phosphate. It participates in carbohydrate degradation; pentose phosphate pathway; D-ribose 5-phosphate from D-ribulose 5-phosphate (non-oxidative stage): step 1/1. Catalyzes the reversible conversion of ribose-5-phosphate to ribulose 5-phosphate. In Pseudomonas syringae pv. tomato (strain ATCC BAA-871 / DC3000), this protein is Ribose-5-phosphate isomerase A.